Here is a 547-residue protein sequence, read N- to C-terminus: Chaperonin GroEL (547 aa).

Residues 30–33, Lys-51, 87–91, Gly-415, and Asp-496 contribute to the ATP site; these read TLGP and DGTTT. The interval 528–547 is disordered; the sequence is DKSDMPAMPPGGMGGMGGMY. The segment covering 538–547 has biased composition (gly residues); sequence GGMGGMGGMY.

The protein belongs to the chaperonin (HSP60) family. Forms a cylinder of 14 subunits composed of two heptameric rings stacked back-to-back. Interacts with the co-chaperonin GroES.

The protein resides in the cytoplasm. It catalyses the reaction ATP + H2O + a folded polypeptide = ADP + phosphate + an unfolded polypeptide.. Its function is as follows. Together with its co-chaperonin GroES, plays an essential role in assisting protein folding. The GroEL-GroES system forms a nano-cage that allows encapsulation of the non-native substrate proteins and provides a physical environment optimized to promote and accelerate protein folding. The protein is Chaperonin GroEL of Chlorobium luteolum (strain DSM 273 / BCRC 81028 / 2530) (Pelodictyon luteolum).